Consider the following 546-residue polypeptide: Elongator complex protein 3 (546 aa).

Residues 81-371 form the Radical SAM core domain; it reads RTASGIAVVA…YRVQRDIPMP (291 aa). [4Fe-4S] cluster is bound by residues cysteine 98, cysteine 108, and cysteine 111. Residues lysine 163, 473 to 476, 496 to 498, and tyrosine 529 each bind acetyl-CoA; these read ELHV and FGM. Positions 395 to 546 constitute an N-acetyltransferase domain; the sequence is TQCRDVRTRE…EGPYMVKRLQ (152 aa).

The protein belongs to the ELP3 family. Component of the elongator complex. It depends on [4Fe-4S] cluster as a cofactor.

It is found in the cytoplasm. The protein resides in the nucleus. The catalysed reaction is uridine(34) in tRNA + acetyl-CoA + S-adenosyl-L-methionine + H2O = 5-(carboxymethyl)uridine(34) in tRNA + 5'-deoxyadenosine + L-methionine + CoA + 2 H(+). It functions in the pathway tRNA modification; 5-methoxycarbonylmethyl-2-thiouridine-tRNA biosynthesis. Catalytic tRNA acetyltransferase subunit of the elongator complex which is required for multiple tRNA modifications, including mcm5U (5-methoxycarbonylmethyl uridine), mcm5s2U (5-methoxycarbonylmethyl-2-thiouridine), and ncm5U (5-carbamoylmethyl uridine). In the elongator complex, acts as a tRNA uridine(34) acetyltransferase by mediating formation of carboxymethyluridine in the wobble base at position 34 in tRNAs. In Gallus gallus (Chicken), this protein is Elongator complex protein 3.